The sequence spans 1756 residues: Transposon Ty1-BR Gag-Pol polyprotein (1756 aa).

3 stretches are compositionally biased toward polar residues: residues 1–10 (MESQQLSNYP), 48–60 (TKANSQQTTTPAS), and 127–152 (QSQFPQYPSSVGTPLSTPSPESGNTF). Disordered stretches follow at residues 1–93 (MESQ…MMTQ), 126–173 (PQSQ…RPPP), and 352–421 (GSRN…SKST). Residues 153–165 (TDSSSADSDMTST) are compositionally biased toward low complexity. The interval 299–401 (NNGIHINNKV…NSKSKTARAH (103 aa)) is RNA-binding. Over residues 402-418 (NVSTSNNSPSTDNDSIS) the composition is skewed to low complexity. Ser416 is subject to Phosphoserine. Residue Asp461 is the For protease activity; shared with dimeric partner of the active site. The integrase-type zinc finger-like stretch occupies residues 583–640 (NVHTSESTRKYPYPFIHRMLAHANAQTIRYSLKNNTITYFNESDVDWSSAIDYQCPDC). An Integrase catalytic domain is found at 660–835 (NSYEPFQYLH…AGLDISTLLP (176 aa)). Residues Asp671 and Asp736 each coordinate Mg(2+). 2 disordered regions span residues 956–1088 (SKAV…TEKR) and 1142–1173 (PTELSDSFKELPPINSRQTNSSLGGIGDSNAY). Positions 960–969 (SPTDSTPPST) are enriched in low complexity. 2 stretches are compositionally biased toward polar residues: residues 1005–1017 (STPQISDIESTDS) and 1031–1043 (MSQSNTHESSYAS). The span at 1044 to 1053 (KSKDFRHSDS) shows a compositional bias: basic and acidic residues. Residues 1054–1082 (YSDNETNHTNVPISSTGGTNNKTVPQTSE) are compositionally biased toward polar residues. The short motif at 1179–1213 (KKRSLEDNETEIKVSRDTWNTKNMRSLEPPRSKKR) is the Bipartite nuclear localization signal element. Residues 1339–1477 (NNYYITQLDI…DILGLEIKYQ (139 aa)) form the Reverse transcriptase Ty1/copia-type domain. Residues Asp1347, Asp1428, Asp1429, Asp1611, Glu1653, and Asp1686 each contribute to the Mg(2+) site. An RNase H Ty1/copia-type domain is found at 1611–1753 (DASYGNQPYY…IKTFKLLTNK (143 aa)).

As to quaternary structure, the capsid protein forms a homotrimer, from which the VLPs are assembled. The protease is a homodimer, whose active site consists of two apposed aspartic acid residues. In terms of processing, initially, virus-like particles (VLPs) are composed of the structural unprocessed proteins Gag and Gag-Pol, and also contain the host initiator methionine tRNA (tRNA(i)-Met) which serves as a primer for minus-strand DNA synthesis, and a dimer of genomic Ty RNA. Processing of the polyproteins occurs within the particle and proceeds by an ordered pathway, called maturation. First, the protease (PR) is released by autocatalytic cleavage of the Gag-Pol polyprotein yielding capsid protein p45 and a Pol-p154 precursor protein. This cleavage is a prerequisite for subsequent processing of Pol-p154 at the remaining sites to release the mature structural and catalytic proteins. Maturation takes place prior to the RT reaction and is required to produce transposition-competent VLPs.

The protein resides in the cytoplasm. The protein localises to the nucleus. It catalyses the reaction DNA(n) + a 2'-deoxyribonucleoside 5'-triphosphate = DNA(n+1) + diphosphate. It carries out the reaction Endonucleolytic cleavage to 5'-phosphomonoester.. Capsid protein (CA) is the structural component of the virus-like particle (VLP), forming the shell that encapsulates the retrotransposons dimeric RNA genome. The particles are assembled from trimer-clustered units and there are holes in the capsid shells that allow for the diffusion of macromolecules. CA also has nucleocapsid-like chaperone activity, promoting primer tRNA(i)-Met annealing to the multipartite primer-binding site (PBS), dimerization of Ty1 RNA and initiation of reverse transcription. Its function is as follows. The aspartyl protease (PR) mediates the proteolytic cleavages of the Gag and Gag-Pol polyproteins after assembly of the VLP. In terms of biological role, reverse transcriptase/ribonuclease H (RT) is a multifunctional enzyme that catalyzes the conversion of the retro-elements RNA genome into dsDNA within the VLP. The enzyme displays a DNA polymerase activity that can copy either DNA or RNA templates, and a ribonuclease H (RNase H) activity that cleaves the RNA strand of RNA-DNA heteroduplexes during plus-strand synthesis and hydrolyzes RNA primers. The conversion leads to a linear dsDNA copy of the retrotransposon that includes long terminal repeats (LTRs) at both ends. Functionally, integrase (IN) targets the VLP to the nucleus, where a subparticle preintegration complex (PIC) containing at least integrase and the newly synthesized dsDNA copy of the retrotransposon must transit the nuclear membrane. Once in the nucleus, integrase performs the integration of the dsDNA into the host genome. The protein is Transposon Ty1-BR Gag-Pol polyprotein (TY1B-BR) of Saccharomyces cerevisiae (strain ATCC 204508 / S288c) (Baker's yeast).